The primary structure comprises 1709 residues: Intraflagellar transport protein 122 (1709 aa).

WD repeat units lie at residues T51–K89 and S132–C171. The segment at T209 to R229 is disordered. The WD 3 repeat unit spans residues L634–L673. Residues I1231–A1256 form an LRR 1 repeat. The segment at L1378–G1404 is disordered. The LRR 2 repeat unit spans residues L1414–L1436.

Its subcellular location is the cell projection. The protein localises to the cilium. It is found in the flagellum. It localises to the cytoplasm. The protein resides in the cytoskeleton. Its subcellular location is the flagellum axoneme. The protein localises to the flagellum basal body. Component of the intraflagellar transport complex A (IFT-A) involved in flagellar assembly. The chain is Intraflagellar transport protein 122 from Giardia intestinalis (strain ATCC 50803 / WB clone C6) (Giardia lamblia).